The following is a 296-amino-acid chain: Transposase for insertion sequence element IST2 (296 aa).

It belongs to the transposase mutator family.

In terms of biological role, required for the transposition of the insertion element. The protein is Transposase for insertion sequence element IST2 of Acidithiobacillus ferrooxidans (Thiobacillus ferrooxidans).